A 535-amino-acid chain; its full sequence is Genetic interactor of prohibitins 3, mitochondrial (535 aa).

The N-terminal 38 residues, 1 to 38 (MLPVSRLCVRSSLRKLVFVRFVSCTSCGVTLQNNNVRG), are a transit peptide targeting the mitochondrion. In terms of domain architecture, CP-type G spans 111 to 283 (MQEVYRHVPA…INDLPGYSTN (173 aa)).

This sequence belongs to the TRAFAC class YlqF/YawG GTPase family. GEP3 subfamily.

Its subcellular location is the mitochondrion. May be involved in the mitochondrial lipid metabolism. The chain is Genetic interactor of prohibitins 3, mitochondrial (GEP3) from Lachancea thermotolerans (strain ATCC 56472 / CBS 6340 / NRRL Y-8284) (Yeast).